A 154-amino-acid chain; its full sequence is MPSRTVRYARYSPRQRRRRMLADRSVRFPNDVLFLDHIRQGDLEQVGRFIRARKVSLDTIHPSGLAALHEAVLSGNLECVKLLVKYGADIHQRDETGWTPLHIACSDGYPDIARYLISLGADRDAANDDGDLPSDLIDPDFKDLVELFKGTSMD.

ANK repeat units follow at residues 63 to 92 (SGLA…DIHQ) and 96 to 125 (TGWT…DRDA).

In terms of assembly, interacts with DYSF and PPP1CA.

In terms of biological role, inhibits phosphatase activity of protein phosphatase 1 (PP1) complexes. The polypeptide is Protein phosphatase 1 regulatory subunit 27 (Ppp1r27) (Mus musculus (Mouse)).